The following is a 173-amino-acid chain: Ribosome maturation factor RimM (173 aa).

One can recognise a PRC barrel domain in the interval 90–169; that stretch reads EDEYFWFDIL…RIDTKGAQDI (80 aa).

It belongs to the RimM family. In terms of assembly, binds ribosomal protein uS19.

The protein localises to the cytoplasm. In terms of biological role, an accessory protein needed during the final step in the assembly of 30S ribosomal subunit, possibly for assembly of the head region. Essential for efficient processing of 16S rRNA. May be needed both before and after RbfA during the maturation of 16S rRNA. It has affinity for free ribosomal 30S subunits but not for 70S ribosomes. This chain is Ribosome maturation factor RimM, found in Nitratiruptor sp. (strain SB155-2).